The chain runs to 287 residues: Putative ankyrin repeat protein R791 (287 aa).

ANK repeat units lie at residues 40-71 (HNFN…PLVF), 76-105 (NVHD…NIET), 107-134 (NDDV…IDNK), 135-164 (TIFE…DIKA), 165-194 (KDNF…TIDI), 196-224 (DDTY…DYRT), and 225-254 (VDDL…DIEA).

In Acanthamoeba polyphaga (Amoeba), this protein is Putative ankyrin repeat protein R791.